Reading from the N-terminus, the 181-residue chain is Macro domain-containing protein in sno 5'region (181 aa).

In terms of domain architecture, Macro spans 1 to 172 (MTTITLVQGD…TFARELGDAG (172 aa)).

This sequence belongs to the MacroD-type family.

This Streptomyces nogalater protein is Macro domain-containing protein in sno 5'region.